Here is a 350-residue protein sequence, read N- to C-terminus: Succinylglutamate desuccinylase (350 aa).

Positions 71, 74, and 169 each coordinate Zn(2+). Glu-233 is an active-site residue.

This sequence belongs to the AspA/AstE family. Succinylglutamate desuccinylase subfamily. Requires Zn(2+) as cofactor.

It carries out the reaction N-succinyl-L-glutamate + H2O = L-glutamate + succinate. Its pathway is amino-acid degradation; L-arginine degradation via AST pathway; L-glutamate and succinate from L-arginine: step 5/5. Transforms N(2)-succinylglutamate into succinate and glutamate. The chain is Succinylglutamate desuccinylase from Pseudoalteromonas atlantica (strain T6c / ATCC BAA-1087).